Reading from the N-terminus, the 108-residue chain is uncharacterized protein (108 aa).

Residues Met1–Leu108 form a disordered region. The segment covering Lys26–Leu56 has biased composition (basic residues). Over residues Gly58–Pro70 the composition is skewed to polar residues. Over residues Lys73–Lys92 the composition is skewed to basic residues. Residues Met93–Leu108 show a composition bias toward basic and acidic residues.

This is an uncharacterized protein from Homo sapiens (Human).